The primary structure comprises 115 residues: Small ribosomal subunit protein uS13 (115 aa).

The interval 92–115 (RRGLPVRGQNTKNNARTRKGSKRK) is disordered. Over residues 106-115 (ARTRKGSKRK) the composition is skewed to basic residues.

The protein belongs to the universal ribosomal protein uS13 family. As to quaternary structure, part of the 30S ribosomal subunit. Forms a loose heterodimer with protein S19. Forms two bridges to the 50S subunit in the 70S ribosome.

Functionally, located at the top of the head of the 30S subunit, it contacts several helices of the 16S rRNA. In the 70S ribosome it contacts the 23S rRNA (bridge B1a) and protein L5 of the 50S subunit (bridge B1b), connecting the 2 subunits; these bridges are implicated in subunit movement. Contacts the tRNAs in the A and P-sites. This Lactobacillus gasseri (strain ATCC 33323 / DSM 20243 / BCRC 14619 / CIP 102991 / JCM 1131 / KCTC 3163 / NCIMB 11718 / NCTC 13722 / AM63) protein is Small ribosomal subunit protein uS13.